A 674-amino-acid chain; its full sequence is tRNA 5-methylaminomethyl-2-thiouridine biosynthesis bifunctional protein MnmC (674 aa).

The interval 1–246 (MFIMSSISHA…KREMIAGSLS (246 aa)) is tRNA (mnm(5)s(2)U34)-methyltransferase. Residues 272–674 (IGGGIASATL…RKGKALTQKV (403 aa)) form an FAD-dependent cmnm(5)s(2)U34 oxidoreductase region.

This sequence in the N-terminal section; belongs to the methyltransferase superfamily. tRNA (mnm(5)s(2)U34)-methyltransferase family. It in the C-terminal section; belongs to the DAO family. Requires FAD as cofactor.

It is found in the cytoplasm. It catalyses the reaction 5-aminomethyl-2-thiouridine(34) in tRNA + S-adenosyl-L-methionine = 5-methylaminomethyl-2-thiouridine(34) in tRNA + S-adenosyl-L-homocysteine + H(+). In terms of biological role, catalyzes the last two steps in the biosynthesis of 5-methylaminomethyl-2-thiouridine (mnm(5)s(2)U) at the wobble position (U34) in tRNA. Catalyzes the FAD-dependent demodification of cmnm(5)s(2)U34 to nm(5)s(2)U34, followed by the transfer of a methyl group from S-adenosyl-L-methionine to nm(5)s(2)U34, to form mnm(5)s(2)U34. This chain is tRNA 5-methylaminomethyl-2-thiouridine biosynthesis bifunctional protein MnmC, found in Vibrio cholerae serotype O1 (strain ATCC 39315 / El Tor Inaba N16961).